The following is a 286-amino-acid chain: MSQTNANDLRNNEVFFISPSNNTNKVLDKISQSEVKLWNKLSGANQKWRLIYDTNKQAYKIKVMDNTSLILTWNAPLSSVSVKTDTNGDNQYWYLLQNYISRNVIIRNYMNPNLVLQYNIDDTLMVSTQTSSSNQFFKFSNCIYEALNNRNCKLQTQLNSDRFLSKNLNSQIIVLWQWFDSSRQKWIIEYNETKSAYTLKCQENNRYLTWIQNSNNYVETYQSTDSLIQYWNINYLDNDASKYILYNLQDTNRVLDVYNSQIANGTHVIVDSYHGNTNQQWIINLI.

The 1-alpha repeat unit spans residues Ser-2–Asn-55. Ricin B-type lectin domains follow at residues Asn-12–Ser-140 and Asp-180–Asn-284. A 1-beta repeat occupies Lys-56–Ile-100. The 1-gamma repeat unit spans residues Ser-101–Asn-148. One copy of the 2-alpha repeat lies at Asn-149–Thr-193. Residues Asn-167–Arg-183 form a sugar-binding site 1 region. The stretch at Lys-194 to Asp-239 is one 2-beta repeat. A 2-gamma repeat occupies Ala-240–Ile-286. Residues Asp-256–Gln-279 form a sugar-binding site 2 region.

Botulinum toxins are produced as progenitor toxins of large molecular sizes of 12S (M toxin) and 16S (L toxin). M toxin consists of a non-toxic, non-hemagglutinin component (NTNHA) and the neurotoxin. L toxin consists of the M toxin and the 3 subcomponents of hemagglutinin (HA). HA is composed of subcomponents of 70, 33, and 17 kDa. The 70 kDa subcomponent undergoes proteolytic processing and is split into HA-55 (also called HA-53 and HA3b) and HA-22-23 (also called HA3a). The stoichiometry of the whole complex has been modeled as one BoNT/C, one NTNHA, three HA-70, six HA-33 and three HA-17.

It is found in the secreted. Functionally, agglutinates human erythrocytes. The hemagglutinin (HA) component of the progenitor toxin protects the structural integrity of botulinum neurotoxin; may increase internalization of the neurotoxin into the bloodstream of the host. The hemagglutinin (HA) component is involved in binding to the upper small intestine through interactions with glycolipids and glycoproteins containing sialic acid moieties. Binds galactose or oligosaccharides with galactose at their non-reducing end. Binds eukaryotic host mucins; binding is inhibited by N-acetyl-beta-neuraminic acid, N-acetyl-D-galactosamine, galactose, and methyl N-acetyl-beta-neuraminic acid. Binds N-acetyl-beta-neuraminic acid, N-acetyl-D-galactosamine and galactose (but not glucose) via 2 sites. The chain is Main hemagglutinin component type C from Clostridium botulinum C (Clostridium botulinum C bacteriophage).